Reading from the N-terminus, the 116-residue chain is Co-chaperonin GroES (116 aa).

The protein belongs to the GroES chaperonin family. In terms of assembly, heptamer of 7 subunits arranged in a ring. Interacts with the chaperonin GroEL.

It is found in the cytoplasm. Together with the chaperonin GroEL, plays an essential role in assisting protein folding. The GroEL-GroES system forms a nano-cage that allows encapsulation of the non-native substrate proteins and provides a physical environment optimized to promote and accelerate protein folding. GroES binds to the apical surface of the GroEL ring, thereby capping the opening of the GroEL channel. In Mycoplasma pneumoniae (strain ATCC 29342 / M129 / Subtype 1) (Mycoplasmoides pneumoniae), this protein is Co-chaperonin GroES.